We begin with the raw amino-acid sequence, 179 residues long: Large ribosomal subunit protein uL5 (179 aa).

It belongs to the universal ribosomal protein uL5 family. In terms of assembly, part of the 50S ribosomal subunit; part of the 5S rRNA/L5/L18/L25 subcomplex. Contacts the 5S rRNA and the P site tRNA. Forms a bridge to the 30S subunit in the 70S ribosome.

This is one of the proteins that bind and probably mediate the attachment of the 5S RNA into the large ribosomal subunit, where it forms part of the central protuberance. In the 70S ribosome it contacts protein S13 of the 30S subunit (bridge B1b), connecting the 2 subunits; this bridge is implicated in subunit movement. Contacts the P site tRNA; the 5S rRNA and some of its associated proteins might help stabilize positioning of ribosome-bound tRNAs. This is Large ribosomal subunit protein uL5 from Bordetella avium (strain 197N).